The sequence spans 424 residues: MFIDTAKIFVKSGKGGDGSISFRREKYIAFGGPDGGDGGKGGNVVLVVDPNMTTLLDFTYKRKYKAEPGGNGAGSKCFGKNGKDLHIKVPMGTIVKDAETDKIMADLSKPEDSYVVAKGGRGGKGNCRFTTPTRQAPDFAEPGMPEEERWIKLELKLLADVGLIGFPNVGKSTLLSVVSKARPKIANYHFTTLKPNLGVVSIEGVNNFVIADIPGIIEGASEGVGLGLDFLRHVERTRVLIHVIDISSVEGRDPYDDFLKINEELKRYSVKLYDRPQIIAANKSDMLFDEEKFEEFKTKVEKHGYNKVFKISAATKQGVDDLMKEAARLLSTILVTDLEISEEDRFIEEEKRFTYSIRKEDNTYIVEGSFVDRLLNAVNVNDPDDLRYFHKVLKNKGVMEELMEMGIEDGDVVRLNDFEFDFLL.

The Obg domain maps to 1-158 (MFIDTAKIFV…RWIKLELKLL (158 aa)). The OBG-type G domain maps to 159–331 (ADVGLIGFPN…LMKEAARLLS (173 aa)). Residues 165–172 (GFPNVGKS), 190–194 (FTTLK), 212–215 (DIPG), 282–285 (NKSD), and 312–314 (SAA) each bind GTP. Residues S172 and T192 each coordinate Mg(2+). The OCT domain occupies 345–424 (RFIEEEKRFT…LNDFEFDFLL (80 aa)).

This sequence belongs to the TRAFAC class OBG-HflX-like GTPase superfamily. OBG GTPase family. Monomer. Mg(2+) is required as a cofactor.

The protein resides in the cytoplasm. Its function is as follows. An essential GTPase which binds GTP, GDP and possibly (p)ppGpp with moderate affinity, with high nucleotide exchange rates and a fairly low GTP hydrolysis rate. Plays a role in control of the cell cycle, stress response, ribosome biogenesis and in those bacteria that undergo differentiation, in morphogenesis control. The protein is GTPase Obg of Clostridium botulinum (strain ATCC 19397 / Type A).